A 151-amino-acid polypeptide reads, in one-letter code: Deoxyuridine 5'-triphosphate nucleotidohydrolase (151 aa).

Residues 70 to 72 (RSG), Asn-83, 87 to 89 (LID), and Met-97 each bind substrate.

Belongs to the dUTPase family. Mg(2+) is required as a cofactor.

The catalysed reaction is dUTP + H2O = dUMP + diphosphate + H(+). Its pathway is pyrimidine metabolism; dUMP biosynthesis; dUMP from dCTP (dUTP route): step 2/2. In terms of biological role, this enzyme is involved in nucleotide metabolism: it produces dUMP, the immediate precursor of thymidine nucleotides and it decreases the intracellular concentration of dUTP so that uracil cannot be incorporated into DNA. In Pseudomonas paraeruginosa (strain DSM 24068 / PA7) (Pseudomonas aeruginosa (strain PA7)), this protein is Deoxyuridine 5'-triphosphate nucleotidohydrolase.